The following is a 229-amino-acid chain: Ribonuclease 3 (229 aa).

In terms of domain architecture, RNase III spans 7–132; the sequence is ISAFCDRIGH…VIAAVYRDAG (126 aa). Glu-45 serves as a coordination point for Mg(2+). The active site involves Asp-49. Mg(2+)-binding residues include Asp-118 and Glu-121. Glu-121 is a catalytic residue. The DRBM domain occupies 157 to 226; sequence DPKTALQEWA…AKALLAQVES (70 aa).

The protein belongs to the ribonuclease III family. Homodimer. Mg(2+) serves as cofactor.

The protein localises to the cytoplasm. The enzyme catalyses Endonucleolytic cleavage to 5'-phosphomonoester.. In terms of biological role, digests double-stranded RNA. Involved in the processing of primary rRNA transcript to yield the immediate precursors to the large and small rRNAs (23S and 16S). Processes some mRNAs, and tRNAs when they are encoded in the rRNA operon. Processes pre-crRNA and tracrRNA of type II CRISPR loci if present in the organism. This chain is Ribonuclease 3, found in Dinoroseobacter shibae (strain DSM 16493 / NCIMB 14021 / DFL 12).